Here is a 220-residue protein sequence, read N- to C-terminus: Ribose-5-phosphate isomerase A (220 aa).

Residues 28 to 31, 81 to 84, and 94 to 97 each bind substrate; these read TGST, DGAD, and KGGG. Glutamate 103 functions as the Proton acceptor in the catalytic mechanism. Substrate is bound at residue lysine 121.

This sequence belongs to the ribose 5-phosphate isomerase family. In terms of assembly, homodimer.

The enzyme catalyses aldehydo-D-ribose 5-phosphate = D-ribulose 5-phosphate. It participates in carbohydrate degradation; pentose phosphate pathway; D-ribose 5-phosphate from D-ribulose 5-phosphate (non-oxidative stage): step 1/1. Functionally, catalyzes the reversible conversion of ribose-5-phosphate to ribulose 5-phosphate. This chain is Ribose-5-phosphate isomerase A, found in Vesicomyosocius okutanii subsp. Calyptogena okutanii (strain HA).